Consider the following 565-residue polypeptide: Thiol:disulfide interchange protein DsbD (565 aa).

A signal peptide spans 1-19 (MAQRIFTLILLLCSTSVFA). 2 disulfides stabilise this stretch: C122/C128 and C182/C304. 7 helical membrane-spanning segments follow: residues 163–183 (LPFS…TPCV), 208–228 (LLTF…GLVV), 243–263 (YVLI…FGLF), 296–316 (IAGL…LLYI), 323–343 (WLGG…LMLI), 365–385 (FGFV…GDIW), and 386–406 (GLRL…ITSL). A Thioredoxin domain is found at 434–565 (WAFGATHTAQ…FSAHLRDRQP (132 aa)). Residues C480 and C483 are joined by a disulfide bond.

This sequence belongs to the thioredoxin family. DsbD subfamily.

Its subcellular location is the cell inner membrane. The enzyme catalyses [protein]-dithiol + NAD(+) = [protein]-disulfide + NADH + H(+). The catalysed reaction is [protein]-dithiol + NADP(+) = [protein]-disulfide + NADPH + H(+). Required to facilitate the formation of correct disulfide bonds in some periplasmic proteins and for the assembly of the periplasmic c-type cytochromes. Acts by transferring electrons from cytoplasmic thioredoxin to the periplasm. This transfer involves a cascade of disulfide bond formation and reduction steps. The sequence is that of Thiol:disulfide interchange protein DsbD from Shigella dysenteriae serotype 1 (strain Sd197).